A 417-amino-acid chain; its full sequence is Serine/threonine-protein kinase SBK1 (417 aa).

The 266-residue stretch at 53-318 (YELVRELGKG…VFRFLKHELT (266 aa)) folds into the Protein kinase domain. Residues 59 to 67 (LGKGTYGKV) and K82 contribute to the ATP site. The active-site Proton acceptor is the D174. Residues 321–405 (LRRRPSHRAR…TDGRTDKSKG (85 aa)) form a disordered region. The segment covering 363 to 382 (PSPPSVGPVVPVPVPVPVPV) has biased composition (pro residues).

The protein belongs to the protein kinase superfamily. Ser/Thr protein kinase family.

Its subcellular location is the cytoplasm. The catalysed reaction is L-seryl-[protein] + ATP = O-phospho-L-seryl-[protein] + ADP + H(+). It catalyses the reaction L-threonyl-[protein] + ATP = O-phospho-L-threonyl-[protein] + ADP + H(+). In terms of biological role, may be involved in signal-transduction pathways related to the control of brain development. In Mus musculus (Mouse), this protein is Serine/threonine-protein kinase SBK1 (Sbk1).